Consider the following 122-residue polypeptide: Large ribosomal subunit protein uL14 (122 aa).

This sequence belongs to the universal ribosomal protein uL14 family. Part of the 50S ribosomal subunit. Forms a cluster with proteins L3 and L19. In the 70S ribosome, L14 and L19 interact and together make contacts with the 16S rRNA in bridges B5 and B8.

Binds to 23S rRNA. Forms part of two intersubunit bridges in the 70S ribosome. This Natranaerobius thermophilus (strain ATCC BAA-1301 / DSM 18059 / JW/NM-WN-LF) protein is Large ribosomal subunit protein uL14.